The sequence spans 502 residues: ATP synthase subunit alpha, chloroplastic (502 aa).

170 to 177 contributes to the ATP binding site; that stretch reads GDRQTGKT.

This sequence belongs to the ATPase alpha/beta chains family. As to quaternary structure, F-type ATPases have 2 components, CF(1) - the catalytic core - and CF(0) - the membrane proton channel. CF(1) has five subunits: alpha(3), beta(3), gamma(1), delta(1), epsilon(1). CF(0) has four main subunits: a, b, b' and c.

Its subcellular location is the plastid. The protein resides in the chloroplast thylakoid membrane. The catalysed reaction is ATP + H2O + 4 H(+)(in) = ADP + phosphate + 5 H(+)(out). Functionally, produces ATP from ADP in the presence of a proton gradient across the membrane. The alpha chain is a regulatory subunit. In Rhodomonas salina (Cryptomonas salina), this protein is ATP synthase subunit alpha, chloroplastic.